We begin with the raw amino-acid sequence, 499 residues long: MFSRRNLVALGLAATVSAGPCDIYEAGDTPCVAAHSTTRALYSSFSGALYQLQRGSDDTTTTISPLTAGGVADASAQDTFCANTTCLITIIYDQSGNGNHLTQAPPGGFDGPDVDGYDNLASAIGAPVTLNGQKAYGVFMSPGTGYRNNEATGTATGDEPEGMYAVLDGTHYNDACCFDYGNAETSSTDTGAGHMEAIYLGNSTTWGYGAGDGPWIMVDMENNLFSGADEGYNSGDPSISYSFVTAAVKGGADKWAIRGGNAASGSLSTYYSGARPDYSGYNPMSKEGAIILGIGGDNSNGAQGTFYEGVMTSGYPSDDVENSVQENIVAAKYVSGSLVSGPSFTSGEVVSLRVTTPGYTTRYIAHTDTTVNTQVVDDDSSTTLKEEASWTVVTGLANSQCFSFESVDTPGSYIRHYNFELLLNANDGTKQFHEDATFCPQAPLNGEGTSLRSWSYPTRYFRHYDNVLYAASNGGVQTFDSKTSFNNDVSFEIETAFAS.

An N-terminal signal peptide occupies residues 1-18 (MFSRRNLVALGLAATVSA). The catalytic stretch occupies residues 19 to 335 (GPCDIYEAGD…ENIVAAKYVS (317 aa)). Cystine bridges form between Cys-21/Cys-31, Cys-81/Cys-86, and Cys-176/Cys-177. N-linked (GlcNAc...) asparagine glycosylation is present at Asn-83. Asn-202 carries an N-linked (GlcNAc...) asparagine glycan. Residue Asp-219 participates in substrate binding. The Nucleophile role is filled by Glu-221. Asn-222, Asn-223, and Gly-296 together coordinate substrate. Asp-297 serves as the catalytic Proton donor. The tract at residues 336 to 499 (GSLVSGPSFT…SFEIETAFAS (164 aa)) is ABD. Cys-401 and Cys-439 are oxidised to a cystine. Substrate contacts are provided by His-416, Asn-418, Phe-419, Asp-435, His-463, Asp-465, Leu-468, and Asp-488.

Belongs to the glycosyl hydrolase 54 family.

Its subcellular location is the secreted. The catalysed reaction is Hydrolysis of terminal non-reducing alpha-L-arabinofuranoside residues in alpha-L-arabinosides.. The protein operates within glycan metabolism; L-arabinan degradation. Functionally, alpha-L-arabinofuranosidase involved in the degradation of arabinoxylan, a major component of plant hemicellulose. Able to hydrolyze 1,5-, 1,3- and 1,2-alpha-linkages not only in L-arabinofuranosyl oligosaccharides, but also in polysaccharides containing terminal non-reducing L-arabinofuranoses in side chains, like L-arabinan, arabinogalactan and arabinoxylan. The protein is Probable alpha-L-arabinofuranosidase B (abfB) of Aspergillus niger (strain ATCC MYA-4892 / CBS 513.88 / FGSC A1513).